Consider the following 126-residue polypeptide: Histone H2B type 3-B (126 aa).

The span at 1 to 12 (MPDPSKSAPAPK) shows a compositional bias: low complexity. Residues 1 to 35 (MPDPSKSAPAPKKGSKKAVTKAQKKDGKKRKRGRK) are disordered. P2 carries the post-translational modification N-acetylproline. At K6 the chain carries N6-(2-hydroxyisobutyryl)lysine; alternate. N6-(beta-hydroxybutyryl)lysine; alternate is present on K6. N6-acetyllysine; alternate is present on K6. K6 is modified (N6-butyryllysine; alternate). At K6 the chain carries N6-crotonyllysine; alternate. Position 6 is an N6-lactoyllysine; alternate (K6). A Glycyl lysine isopeptide (Lys-Gly) (interchain with G-Cter in SUMO2); alternate cross-link involves residue K6. S7 is modified (ADP-ribosylserine). An N6-(beta-hydroxybutyryl)lysine; alternate modification is found at K12. N6-acetyllysine; alternate occurs at positions 12 and 13. N6-crotonyllysine; alternate occurs at positions 12 and 13. K12 is subject to N6-lactoyllysine; alternate. At K13 the chain carries N6-(2-hydroxyisobutyryl)lysine; alternate. S15 carries the phosphoserine; by STK4/MST1 modification. Residues K16, K17, K21, and K24 each carry the N6-acetyllysine; alternate modification. An N6-crotonyllysine; alternate mark is found at K16, K17, K21, and K24. Residues K16, K17, K21, and K24 each carry the N6-lactoyllysine; alternate modification. N6-(beta-hydroxybutyryl)lysine; alternate is present on residues K17 and K21. K17 bears the N6-glutaryllysine; alternate mark. 2 positions are modified to N6-(2-hydroxyisobutyryl)lysine; alternate: K21 and K24. K21 is modified (N6-butyryllysine; alternate). Residue K21 forms a Glycyl lysine isopeptide (Lys-Gly) (interchain with G-Cter in SUMO2); alternate linkage. N6-(2-hydroxyisobutyryl)lysine is present on K25. K35 carries the post-translational modification N6-(2-hydroxyisobutyryl)lysine; alternate. K35 is subject to N6-(beta-hydroxybutyryl)lysine; alternate. K35 bears the N6-crotonyllysine; alternate mark. K35 carries the post-translational modification N6-glutaryllysine; alternate. K35 carries the N6-succinyllysine; alternate modification. K35 participates in a covalent cross-link: Glycyl lysine isopeptide (Lys-Gly) (interchain with G-Cter in ubiquitin); alternate. A PolyADP-ribosyl glutamic acid modification is found at E36. S37 carries the phosphoserine; by AMPK modification. An N6-(2-hydroxyisobutyryl)lysine; alternate mark is found at K44, K47, and K58. K44 bears the N6-lactoyllysine; alternate mark. N6-glutaryllysine; alternate occurs at positions 44 and 47. K47 is modified (N6-methyllysine; alternate). Position 58 is an N6,N6-dimethyllysine; alternate (K58). R80 bears the Dimethylated arginine mark. K86 carries the post-translational modification N6-(2-hydroxyisobutyryl)lysine; alternate. The residue at position 86 (K86) is an N6-(beta-hydroxybutyryl)lysine; alternate. K86 is modified (N6-acetyllysine; alternate). An N6-lactoyllysine; alternate modification is found at K86. Position 86 is an N6,N6,N6-trimethyllysine; alternate (K86). 2 positions are modified to omega-N-methylarginine: R87 and R93. At K109 the chain carries N6-(2-hydroxyisobutyryl)lysine; alternate. An N6-lactoyllysine; alternate modification is found at K109. N6-glutaryllysine; alternate is present on K109. The residue at position 109 (K109) is an N6-methyllysine; alternate. An O-linked (GlcNAc) serine glycan is attached at S113. Phosphothreonine is present on T116. 2 positions are modified to N6-(2-hydroxyisobutyryl)lysine; alternate: K117 and K121. 2 positions are modified to N6-(beta-hydroxybutyryl)lysine; alternate: K117 and K121. Residues K117 and K121 each carry the N6-lactoyllysine; alternate modification. N6-glutaryllysine; alternate is present on residues K117 and K121. K117 and K121 each carry N6-succinyllysine; alternate. K117 carries the post-translational modification N6-malonyllysine; alternate. K117 carries the N6-methylated lysine; alternate modification. A Glycyl lysine isopeptide (Lys-Gly) (interchain with G-Cter in ubiquitin); alternate cross-link involves residue K121.

It belongs to the histone H2B family. The nucleosome is a histone octamer containing two molecules each of H2A, H2B, H3 and H4 assembled in one H3-H4 heterotetramer and two H2A-H2B heterodimers. The octamer wraps approximately 147 bp of DNA. In terms of processing, monoubiquitination at Lys-35 (H2BK34Ub) by the MSL1/MSL2 dimer is required for histone H3 'Lys-4' (H3K4me) and 'Lys-79' (H3K79me) methylation and transcription activation at specific gene loci, such as HOXA9 and MEIS1 loci. Similarly, monoubiquitination at Lys-121 (H2BK120Ub) by the RNF20/40 complex gives a specific tag for epigenetic transcriptional activation and is also prerequisite for histone H3 'Lys-4' and 'Lys-79' methylation. It also functions cooperatively with the FACT dimer to stimulate elongation by RNA polymerase II. H2BK120Ub also acts as a regulator of mRNA splicing: deubiquitination by USP49 is required for efficient cotranscriptional splicing of a large set of exons. Post-translationally, phosphorylation at Ser-37 (H2BS36ph) by AMPK in response to stress promotes transcription. Phosphorylated on Ser-15 (H2BS14ph) by STK4/MST1 during apoptosis; which facilitates apoptotic chromatin condensation. Also phosphorylated on Ser-15 in response to DNA double strand breaks (DSBs), and in correlation with somatic hypermutation and immunoglobulin class-switch recombination. GlcNAcylation at Ser-113 promotes monoubiquitination of Lys-121. It fluctuates in response to extracellular glucose, and associates with transcribed genes. In terms of processing, ADP-ribosylated by PARP1 or PARP2 on Ser-7 (H2BS6ADPr) in response to DNA damage. H2BS6ADPr promotes recruitment of CHD1L. Poly ADP-ribosylation on Glu-36 (H2BE35ADPr) by PARP1 regulates adipogenesis: it inhibits phosphorylation at Ser-37 (H2BS36ph), thereby blocking expression of pro-adipogenetic genes. Post-translationally, crotonylation (Kcr) is specifically present in male germ cells and marks testis-specific genes in post-meiotic cells, including X-linked genes that escape sex chromosome inactivation in haploid cells. Crotonylation marks active promoters and enhancers and confers resistance to transcriptional repressors. It is also associated with post-meiotically activated genes on autosomes. Lactylated in macrophages by EP300/P300 by using lactoyl-CoA directly derived from endogenous or exogenous lactate, leading to stimulates gene transcription.

Its subcellular location is the nucleus. It localises to the chromosome. Functionally, core component of nucleosome. Nucleosomes wrap and compact DNA into chromatin, limiting DNA accessibility to the cellular machineries which require DNA as a template. Histones thereby play a central role in transcription regulation, DNA repair, DNA replication and chromosomal stability. DNA accessibility is regulated via a complex set of post-translational modifications of histones, also called histone code, and nucleosome remodeling. This is Histone H2B type 3-B from Homo sapiens (Human).